The sequence spans 359 residues: DNA replication and repair protein RecF (359 aa).

ATP is bound at residue 30-37; the sequence is GNNGSGKT.

The protein belongs to the RecF family.

Its subcellular location is the cytoplasm. Functionally, the RecF protein is involved in DNA metabolism; it is required for DNA replication and normal SOS inducibility. RecF binds preferentially to single-stranded, linear DNA. It also seems to bind ATP. This Haemophilus influenzae (strain 86-028NP) protein is DNA replication and repair protein RecF.